Here is a 339-residue protein sequence, read N- to C-terminus: Diacylglycerol acyltransferase/mycolyltransferase Ag85A (339 aa).

Residues 1–43 (MKLVDRFRGAVTGMPRRLMVGAVGAALLSGLVGFVGGSATASA) form the signal peptide. 85–86 (MR) provides a ligand contact to substrate. The segment at 101–111 (FEWYNQSGISV) is fibronectin-binding. C130 and C135 are disulfide-bonded. 2 residues coordinate substrate: S169 and D197. The active-site Nucleophile is the S169. E272 is a catalytic residue. Residues 274 to 277 (FVRT), K281, and 304 to 306 (HDW) contribute to the substrate site. The active site involves H304.

This sequence belongs to the mycobacterial A85 antigen family. Homodimer.

Its subcellular location is the secreted. It is found in the cell wall. The protein resides in the cytoplasm. It catalyses the reaction an acyl-CoA + a 1,2-diacyl-sn-glycerol = a triacyl-sn-glycerol + CoA. The enzyme catalyses 2 alpha,alpha'-trehalose 6-mycolate = alpha,alpha'-trehalose 6,6'-bismycolate + alpha,alpha-trehalose. Its function is as follows. The antigen 85 proteins (FbpA, FbpB, FbpC) are responsible for the high affinity of mycobacteria for fibronectin, a large adhesive glycoprotein, which facilitates the attachment of M.tuberculosis to murine alveolar macrophages (AMs). They also help to maintain the integrity of the cell wall by catalyzing the transfer of mycolic acids to cell wall arabinogalactan, and through the synthesis of alpha,alpha-trehalose dimycolate (TDM, cord factor). They catalyze the transfer of a mycoloyl residue from one molecule of alpha,alpha-trehalose monomycolate (TMM) to another TMM, leading to the formation of TDM. FbpA mediates triacylglycerol (TAG) formation with long-chain acyl-CoA as the acyl donor and 1,2-dipalmitoyl-sn-glycerol (1,2-dipalmitin) as the acyl acceptor. It has a preference for C26:0-CoA over C18:1-CoA. This chain is Diacylglycerol acyltransferase/mycolyltransferase Ag85A (fbpA), found in Mycobacterium gordonae.